We begin with the raw amino-acid sequence, 206 residues long: Protein SYM1 (206 aa).

3 helical membrane-spanning segments follow: residues 16-36 (PLIT…YLAQ), 103-123 (LVFA…VLEF), and 155-175 (LFNF…IFSI).

This sequence belongs to the peroxisomal membrane protein PXMP2/4 family.

Its subcellular location is the mitochondrion inner membrane. In terms of biological role, may be involved in cellular response to stress. Required to maintain mitochondrial DNA (mtDNA) integrity and stability. This Debaryomyces hansenii (strain ATCC 36239 / CBS 767 / BCRC 21394 / JCM 1990 / NBRC 0083 / IGC 2968) (Yeast) protein is Protein SYM1 (SYM1).